Here is a 592-residue protein sequence, read N- to C-terminus: MTTDVKEKATFKLLDLIDSVTGKKSLLLERDLSGILGQIVTTNTLQEHGIPQVYWFNENIPNDIEKKTIYLCRPTYENAKLVATHVRQFQRDMLRIESTVIVLPTSNILFETVLQEEGVFGELLVTEWPLHAVPLDKDLLSLELGPEKLEESLLQRSTDALIDFERTHGRFPRVSGRGPYAAKMLELLEKTYQEEATINFGKVEGEISALYDSVLLVDRSLDRITPFLTQLTYFGFLDEILGIQQMNVKLPSSLVNRNEASNTGPMKKFSLSSSSSQITKEIRDINFNCIGPYLSKIARKLSSDFEGRRQAKTVNQIRDFVSKLGSLQSEHTSLNIHTGLAETLVQHTKNNYFQKLLQLQHLLVSHADSFTQFNLLDEIIYAEAPVEEVFRVLCLASITTNGLRRKDIDHYRREITQTYGYYHLLTFQALIDAGLLRLRQSTNISLQKSLSYSTWLNTYPLVKDEVDEQNPEDIAYTYSGYGPLSVHIAYDILKGRDNEEKILKLQNMPGTYVDKWTLDQEKVMPKNLKTNVPGKRRVLVFFIGGCTYTELAAFRLLQEKEDLYEFTFMTTGMVTGSSLIRAFIPNIESLNE.

The protein belongs to the STXBP/unc-18/SEC1 family.

In terms of biological role, essential for vacuolar biogenesis, maturation and function. Involved in the sorting of vacuolar proteins from the Golgi apparatus and their targeting to the vacuole. This is Vacuolar protein sorting-associated protein 33 (vps33) from Schizosaccharomyces pombe (strain 972 / ATCC 24843) (Fission yeast).